A 374-amino-acid polypeptide reads, in one-letter code: Ribosomal RNA large subunit methyltransferase G (374 aa).

It belongs to the methyltransferase superfamily. RlmG family.

Its subcellular location is the cytoplasm. The catalysed reaction is guanosine(1835) in 23S rRNA + S-adenosyl-L-methionine = N(2)-methylguanosine(1835) in 23S rRNA + S-adenosyl-L-homocysteine + H(+). In terms of biological role, specifically methylates the guanine in position 1835 (m2G1835) of 23S rRNA. The sequence is that of Ribosomal RNA large subunit methyltransferase G from Pseudomonas aeruginosa (strain UCBPP-PA14).